A 95-amino-acid polypeptide reads, in one-letter code: Aspartyl/glutamyl-tRNA(Asn/Gln) amidotransferase subunit C (95 aa).

This sequence belongs to the GatC family. As to quaternary structure, heterotrimer of A, B and C subunits.

The enzyme catalyses L-glutamyl-tRNA(Gln) + L-glutamine + ATP + H2O = L-glutaminyl-tRNA(Gln) + L-glutamate + ADP + phosphate + H(+). It carries out the reaction L-aspartyl-tRNA(Asn) + L-glutamine + ATP + H2O = L-asparaginyl-tRNA(Asn) + L-glutamate + ADP + phosphate + 2 H(+). In terms of biological role, allows the formation of correctly charged Asn-tRNA(Asn) or Gln-tRNA(Gln) through the transamidation of misacylated Asp-tRNA(Asn) or Glu-tRNA(Gln) in organisms which lack either or both of asparaginyl-tRNA or glutaminyl-tRNA synthetases. The reaction takes place in the presence of glutamine and ATP through an activated phospho-Asp-tRNA(Asn) or phospho-Glu-tRNA(Gln). In Rhodopseudomonas palustris (strain BisB18), this protein is Aspartyl/glutamyl-tRNA(Asn/Gln) amidotransferase subunit C.